We begin with the raw amino-acid sequence, 446 residues long: Argininosuccinate lyase (446 aa).

It belongs to the lyase 1 family. Argininosuccinate lyase subfamily.

Its subcellular location is the cytoplasm. The catalysed reaction is 2-(N(omega)-L-arginino)succinate = fumarate + L-arginine. It participates in amino-acid biosynthesis; L-arginine biosynthesis; L-arginine from L-ornithine and carbamoyl phosphate: step 3/3. The chain is Argininosuccinate lyase from Phocaeicola vulgatus (strain ATCC 8482 / DSM 1447 / JCM 5826 / CCUG 4940 / NBRC 14291 / NCTC 11154) (Bacteroides vulgatus).